The primary structure comprises 355 residues: Aminopeptidase N (355 aa).

Residues Glu156 and 290–294 each bind substrate; that span reads GAMEN. His326 serves as a coordination point for Zn(2+). Glu327 serves as the catalytic Proton acceptor. Positions 330 and 349 each coordinate Zn(2+). Substrate is bound at residue Glu349.

It belongs to the peptidase M1 family. It depends on Zn(2+) as a cofactor.

It localises to the cytoplasm. The enzyme catalyses Release of an N-terminal amino acid, Xaa-|-Yaa- from a peptide, amide or arylamide. Xaa is preferably Ala, but may be most amino acids including Pro (slow action). When a terminal hydrophobic residue is followed by a prolyl residue, the two may be released as an intact Xaa-Pro dipeptide.. Functionally, aminopeptidase N is involved in the degradation of intracellular peptides generated by protein breakdown during normal growth as well as in response to nutrient starvation. This chain is Aminopeptidase N (pepN), found in Acetobacter pasteurianus (Acetobacter turbidans).